The following is a 136-amino-acid chain: Large ribosomal subunit protein uL16 (136 aa).

The protein belongs to the universal ribosomal protein uL16 family. As to quaternary structure, part of the 50S ribosomal subunit.

Its function is as follows. Binds 23S rRNA and is also seen to make contacts with the A and possibly P site tRNAs. The chain is Large ribosomal subunit protein uL16 from Shewanella halifaxensis (strain HAW-EB4).